The sequence spans 202 residues: MIGRLRGTLAEKQPPHLILDVNGLGYEVEVPMTTLYRLPSVGEPLTLHTHLVVREDAQLLYGFASKRERDFFRELIRLNGVGPKLALALMSSLEVDELVRCVQAQDTSALTKVPGVGKKTAERLLVELKDRFKAWEAVPSMFALVPNQPDAPAPVASAESDAVSALISLGYKPQEASKAVSAIKDKGLSSEDMIRRALKGMI.

The tract at residues 1–64 (MIGRLRGTLA…EDAQLLYGFA (64 aa)) is domain I. Residues 65–143 (SKRERDFFRE…AWEAVPSMFA (79 aa)) form a domain II region. A flexible linker region spans residues 144-154 (LVPNQPDAPAP). Positions 154-202 (PVASAESDAVSALISLGYKPQEASKAVSAIKDKGLSSEDMIRRALKGMI) are domain III.

It belongs to the RuvA family. Homotetramer. Forms an RuvA(8)-RuvB(12)-Holliday junction (HJ) complex. HJ DNA is sandwiched between 2 RuvA tetramers; dsDNA enters through RuvA and exits via RuvB. An RuvB hexamer assembles on each DNA strand where it exits the tetramer. Each RuvB hexamer is contacted by two RuvA subunits (via domain III) on 2 adjacent RuvB subunits; this complex drives branch migration. In the full resolvosome a probable DNA-RuvA(4)-RuvB(12)-RuvC(2) complex forms which resolves the HJ.

The protein localises to the cytoplasm. Its function is as follows. The RuvA-RuvB-RuvC complex processes Holliday junction (HJ) DNA during genetic recombination and DNA repair, while the RuvA-RuvB complex plays an important role in the rescue of blocked DNA replication forks via replication fork reversal (RFR). RuvA specifically binds to HJ cruciform DNA, conferring on it an open structure. The RuvB hexamer acts as an ATP-dependent pump, pulling dsDNA into and through the RuvAB complex. HJ branch migration allows RuvC to scan DNA until it finds its consensus sequence, where it cleaves and resolves the cruciform DNA. The protein is Holliday junction branch migration complex subunit RuvA of Pseudomonas fluorescens (strain ATCC BAA-477 / NRRL B-23932 / Pf-5).